The primary structure comprises 742 residues: UPF0313 protein MA_4618 (742 aa).

The segment at Met-1–Lys-125 is disordered. The interval Met-1–Pro-128 is unknown. Composition is skewed to basic and acidic residues over residues Glu-17 to Gly-40 and Lys-49 to Gly-73. The segment covering Thr-106–Lys-115 has biased composition (basic residues). The segment at Met-129 to Gln-742 is UPF0313. Residues Ala-438–Arg-707 enclose the Radical SAM core domain. [4Fe-4S] cluster contacts are provided by Cys-452, Cys-456, and Cys-459.

In the C-terminal section; belongs to the UPF0313 family. Requires [4Fe-4S] cluster as cofactor.

This Methanosarcina acetivorans (strain ATCC 35395 / DSM 2834 / JCM 12185 / C2A) protein is UPF0313 protein MA_4618.